We begin with the raw amino-acid sequence, 197 residues long: Xanthine phosphoribosyltransferase (197 aa).

Residues L20 and N27 each contribute to the xanthine site. Residue 128–132 participates in 5-phospho-alpha-D-ribose 1-diphosphate binding; that stretch reads ANGQA. Residue K156 coordinates xanthine.

It belongs to the purine/pyrimidine phosphoribosyltransferase family. Xpt subfamily. In terms of assembly, homodimer.

Its subcellular location is the cytoplasm. The enzyme catalyses XMP + diphosphate = xanthine + 5-phospho-alpha-D-ribose 1-diphosphate. Its pathway is purine metabolism; XMP biosynthesis via salvage pathway; XMP from xanthine: step 1/1. Functionally, converts the preformed base xanthine, a product of nucleic acid breakdown, to xanthosine 5'-monophosphate (XMP), so it can be reused for RNA or DNA synthesis. This chain is Xanthine phosphoribosyltransferase, found in Bacillus cereus (strain ATCC 10987 / NRS 248).